The following is a 316-amino-acid chain: Olfactory receptor 4N4C (316 aa).

Residues 1–26 (MKIANNTVVTEFILLGLTQSQDIQLL) lie on the Cytoplasmic side of the membrane. Residues 27–47 (VFVLILIFYLIILPGNFLIIF) traverse the membrane as a helical segment. The Extracellular portion of the chain corresponds to 48 to 56 (TIRSDPGLT). A helical membrane pass occupies residues 57 to 77 (APLYLFLGNLAFLDASYSFIV). Over 78-99 (APRMLVDFLSEKKVISYRGCIT) the chain is Cytoplasmic. The cysteines at positions 97 and 179 are disulfide-linked. A helical transmembrane segment spans residues 100–120 (QLFFLHFLGGGEGLLLVVMAF). At 121-143 (DRYIAICRPLHCSTVMNPRACYA) the chain is on the extracellular side. Residues 144 to 164 (MMLALWLGGFVHSIIQVVLIL) traverse the membrane as a helical segment. At 165–204 (RLPFCGPNQLDNFFCDVRQVIKLACTDMFVVELLMVFNSG) the chain is on the cytoplasmic side. Residues 205 to 225 (LMTLLCFLGLLASYAVILCHV) form a helical membrane-spanning segment. Over 226–243 (RRAASEGKNKAMSTCTTR) the chain is Extracellular. Residues 244-264 (VIIILLMFGPAIFIYICPFRA) traverse the membrane as a helical segment. Over 265–268 (LPAD) the chain is Cytoplasmic. Residues 269–289 (KMVSLFHTVIFPLMNPMIYTL) traverse the membrane as a helical segment. Residues 290–316 (RNQEVKTSMKRLLSRHVVCQVDFIIRN) are Extracellular-facing.

Belongs to the G-protein coupled receptor 1 family.

The protein resides in the membrane. Odorant receptor. The chain is Olfactory receptor 4N4C from Homo sapiens (Human).